We begin with the raw amino-acid sequence, 246 residues long: O-antigen export system ATP-binding protein RfbB (246 aa).

The ABC transporter domain maps to 22 to 246 (SGIKDLVFHP…IIELYKQAMA (225 aa)). 63–70 (GRNGAGKS) lines the ATP pocket.

The protein belongs to the ABC transporter superfamily.

It is found in the cell inner membrane. Functionally, may form an ATP-driven O-antigen export apparatus, in association with RfbA. This is O-antigen export system ATP-binding protein RfbB (rfbB) from Klebsiella pneumoniae.